We begin with the raw amino-acid sequence, 198 residues long: Peptide deformylase (198 aa).

Positions 123 and 170 each coordinate Fe cation. Residue Glu-171 is part of the active site. His-174 is a Fe cation binding site.

It belongs to the polypeptide deformylase family. Requires Fe(2+) as cofactor.

It catalyses the reaction N-terminal N-formyl-L-methionyl-[peptide] + H2O = N-terminal L-methionyl-[peptide] + formate. Its function is as follows. Removes the formyl group from the N-terminal Met of newly synthesized proteins. Requires at least a dipeptide for an efficient rate of reaction. N-terminal L-methionine is a prerequisite for activity but the enzyme has broad specificity at other positions. The polypeptide is Peptide deformylase (Mycoplasmopsis pulmonis (strain UAB CTIP) (Mycoplasma pulmonis)).